The chain runs to 74 residues: Putative defensin-like protein 36 (74 aa).

The first 22 residues, 1–22 (MASNKVSFFLVLCLCILLAGEC), serve as a signal peptide directing secretion. Disulfide bonds link cysteine 33-cysteine 59, cysteine 45-cysteine 69, and cysteine 49-cysteine 71.

The protein belongs to the DEFL family.

The protein resides in the secreted. This chain is Putative defensin-like protein 36, found in Arabidopsis thaliana (Mouse-ear cress).